Reading from the N-terminus, the 74-residue chain is uncharacterized protein (74 aa).

A helical membrane pass occupies residues 15 to 32 (FLHALTVTFLSDIFVWLV).

Its subcellular location is the membrane. This is an uncharacterized protein from Saccharomyces cerevisiae (strain ATCC 204508 / S288c) (Baker's yeast).